A 3567-amino-acid chain; its full sequence is Zinc finger homeobox protein 4 (3567 aa).

Residue methionine 1 is modified to N-acetylmethionine. Disordered regions lie at residues 1-54 (METC…LKTD), 425-480 (LSHS…AYSN), 522-545 (TSSSSATVSDDTEKKKQTAAVRAS), and 565-611 (SKDS…SPGS). A compositionally biased stretch (polar residues) spans 9–28 (ISRQENGQSTSKLCGTTQLD). 2 stretches are compositionally biased toward basic and acidic residues: residues 39–54 (EPDRENSSTDDNLKTD) and 434–452 (KMSESKDQENNCERPKESN). Positions 468–480 (EPGDEDEEDAYSN) are enriched in acidic residues. 3 C2H2-type zinc fingers span residues 613–636 (IECPKCDTVLGSSRSLGGHMTMMH), 644–667 (LKCPKCNWHYKYQQTLEAHMKEKH), and 699–723 (FRCEVCNYSTTTKGNLSIHMQSDKH). A C2H2-type 4; degenerate zinc finger spans residues 767-789 (WRCEVCDYETNVARNLRIHMTSE). 3 consecutive C2H2-type zinc fingers follow at residues 917-941 (YQCKLCNYNTQLKANFQLHCKTDKH), 973-995 (LKCNACDYYTNSVDKLRLHTTNH), and 1021-1045 (YYCAVCDYTTKVKLNLVQHVRSVKH). The segment at 1098–1160 (EQHEEAEGAI…EDVATKRSKP (63 aa)) is disordered. Basic and acidic residues-rich tracts occupy residues 1120 to 1132 (TSERDNSEGKNSN) and 1148 to 1160 (AKEEDVATKRSKP). Residue lysine 1149 forms a Glycyl lysine isopeptide (Lys-Gly) (interchain with G-Cter in SUMO2) linkage. 2 consecutive C2H2-type zinc fingers follow at residues 1172–1195 (YQCPYCNYNSRDQSRIQMHVLSQH) and 1201–1224 (ICCPLCQDVLSNKMHLQLHLTHLH). Residues 1254 to 1324 (AASEKSERDT…WNKNSSKDVK (71 aa)) form a disordered region. Over residues 1281 to 1310 (MDDKSMAGLEDSKANVEVKNEEQKPTKEPL) the composition is skewed to basic and acidic residues. Residues lysine 1299 and lysine 1324 each participate in a glycyl lysine isopeptide (Lys-Gly) (interchain with G-Cter in SUMO2) cross-link. 2 C2H2-type zinc fingers span residues 1352 to 1374 (YRCNHCSLAFKTMQKLQIHSQYH) and 1380 to 1403 (TMCNLCQRSFRTFQALKKHLEAGH). A disordered region spans residues 1429–1480 (ETMSQDDHGLEQEMEREYEVDHEGKASPVGSDSSSIPDDMGSEPKRTLPFRK). The span at 1433-1453 (QDDHGLEQEMEREYEVDHEGK) shows a compositional bias: basic and acidic residues. The C2H2-type 12 zinc finger occupies 1496 to 1522 (YKCTVCKESFTQKNILLVHYNSVSHLH). Lysine 1546 is covalently cross-linked (Glycyl lysine isopeptide (Lys-Gly) (interchain with G-Cter in SUMO2)). Residues 1548-1572 (YKCSICNVAYSQSSTLEIHMRSVLH) form a C2H2-type 13 zinc finger. Low complexity-rich tracts occupy residues 1761–1772 (TQPQLQPQKQQQ) and 1779–1791 (QQQQQQASKLLKQ). Disordered regions lie at residues 1761-1791 (TQPQLQPQKQQQQPPPPQQQQQQQASKLLKQ) and 1809-1858 (SYKE…IASG). Residue lysine 1790 forms a Glycyl lysine isopeptide (Lys-Gly) (interchain with G-Cter in SUMO2) linkage. Residues 1809–1845 (SYKEAEDISEKPEKPKQEFISEGEGLKEGKDTKKQKS) are compositionally biased toward basic and acidic residues. Residues 1901 to 1924 (LECGTCGKLFSNVLILKSHQEHVH) form a C2H2-type 14 zinc finger. Residues 1948–2024 (YPISPSSPET…PPSAPPQVQL (77 aa)) are disordered. Composition is skewed to pro residues over residues 1955–1974 (PETPPPPPPPPPLPPAPPQP) and 1991–2019 (QAPPPTPPPPPPPPPPPPPPPPPPPPSAP). 2 DNA-binding regions (homeobox) span residues 2084 to 2143 (FKRP…RQRN) and 2181 to 2240 (KRSS…RKSY). The C2H2-type 15; degenerate zinc-finger motif lies at 2267 to 2291 (YQCKKCNVVFPRIFDLITHQKKQCY). 2 disordered regions span residues 2289–2311 (QCYKDEDDDAQDESQTEDSMDAT) and 2328–2431 (AKNA…SPLQ). Positions 2293–2309 (DEDDDAQDESQTEDSMD) are enriched in acidic residues. A compositionally biased stretch (low complexity) spans 2331 to 2345 (AAAPAASSGSGTSTP). Basic and acidic residues predominate over residues 2352 to 2370 (PEPEKTSPKPEYPAEKPKQ). Over residues 2419 to 2431 (SASQTPVPSSPLQ) the composition is skewed to polar residues. A C2H2-type 16 zinc finger spans residues 2448-2470 (YQCDQCTVAFPTLELWQEHQHMH). A compositionally biased stretch (polar residues) spans 2507-2530 (LGSSLTQMPPQASSSHTTAPTTVA). Positions 2507–2564 (LGSSLTQMPPQASSSHTTAPTTVAASLKRKLDDKEDNNCSEKEGGNSGEDQHRDKRLR) are disordered. Positions 2535 to 2559 (RKLDDKEDNNCSEKEGGNSGEDQHR) are enriched in basic and acidic residues. The segment at residues 2560–2619 (DKRLRTTITPEQLEILYEKYLLDSNPTRKMLDHIAREVGLKKRVVQVWFQNTRARERKGQ) is a DNA-binding region (homeobox 3). A C2H2-type 17 zinc finger spans residues 2630-2653 (KRCPFCRALFKAKSALESHIRSRH). Residue serine 2663 is modified to Phosphoserine. The segment covering 2764-2785 (AISDATTGDEGNTEMESTTGSS) has biased composition (polar residues). 2 disordered regions span residues 2764-2811 (AISD…TTPT) and 2829-2885 (HFND…PGHK). A compositionally biased stretch (basic and acidic residues) spans 2830 to 2839 (FNDKDGDHDQ). Low complexity predominate over residues 2862 to 2874 (PSSPNPFGSSNPF). Residues 2884–2943 (HKRFRTQMSNLQLKVLKACFSDYRTPTMQECEMLGNEIGLPKRVVQVWFQNARAKEKKFK) constitute a DNA-binding region (homeobox 4). Residues 2962 to 2986 (PECTLCGVKYSARLSIRDHIFSKQH) form a C2H2-type 18 zinc finger. The segment covering 3092–3110 (SATSSPALSLSSAPTKPLL) has biased composition (low complexity). Disordered regions lie at residues 3092-3172 (SATS…KEEK) and 3281-3337 (LQKQ…LESK). Residues 3111–3125 (QTPPPPPPPPPPPPS) are compositionally biased toward pro residues. Over residues 3126–3135 (SSLSGQQTEQ) the composition is skewed to polar residues. Basic and acidic residues predominate over residues 3153-3172 (IKEEELEATKPEKHPKKEEK). Lysine 3154 participates in a covalent cross-link: Glycyl lysine isopeptide (Lys-Gly) (interchain with G-Cter in SUMO2). Positions 3265 to 3294 (ALLQQYQQYQQNLQESLQKQQKQQQEQQQK) form a coiled coil. The segment covering 3281-3293 (LQKQQKQQQEQQQ) has biased composition (low complexity). Residues 3294 to 3314 (KPVQAKTSKVESDQPQNSNDA) show a composition bias toward polar residues. The segment covering 3315–3337 (SETKEDKSTATESTKEEPQLESK) has biased composition (basic and acidic residues). The C2H2-type 19; degenerate zinc finger occupies 3354–3378 (FICRKCQMMFTDEDAAVNHQKSFCY). The segment at 3398–3422 (YQCLACDVAISGNEALSQHLQSSLH) adopts a C2H2-type 20 zinc-finger fold. 2 disordered regions span residues 3443–3462 (HSVCSPNPNTTSTSQSAASS) and 3511–3534 (STSGVQTSLPTESCSDESDSELSQ). Positions 3447–3462 (SPNPNTTSTSQSAASS) are enriched in low complexity.

The protein belongs to the krueppel C2H2-type zinc-finger protein family. Expressed in brain, skeletal muscle and liver. Very low expression in stomach.

It localises to the nucleus. Functionally, may play a role in neural and muscle differentiation. May be involved in transcriptional regulation. The protein is Zinc finger homeobox protein 4 (ZFHX4) of Homo sapiens (Human).